A 163-amino-acid polypeptide reads, in one-letter code: Large ribosomal subunit protein uL15 (163 aa).

Positions 27–37 are enriched in gly residues; that stretch reads SGLGKTAGRGQ. The interval 27 to 46 is disordered; it reads SGLGKTAGRGQKGQKSRSGV.

Belongs to the universal ribosomal protein uL15 family. Part of the 50S ribosomal subunit.

Binds to the 23S rRNA. This is Large ribosomal subunit protein uL15 from Zymomonas mobilis subsp. mobilis (strain ATCC 31821 / ZM4 / CP4).